Reading from the N-terminus, the 320-residue chain is Nucleotide-binding protein Psyc_0118 (320 aa).

32–39 provides a ligand contact to ATP; the sequence is GRSGSGKT. Residue 82-85 coordinates GTP; sequence DIRT.

It belongs to the RapZ-like family.

Functionally, displays ATPase and GTPase activities. The chain is Nucleotide-binding protein Psyc_0118 from Psychrobacter arcticus (strain DSM 17307 / VKM B-2377 / 273-4).